Consider the following 488-residue polypeptide: 3-octaprenyl-4-hydroxybenzoate carboxy-lyase (488 aa).

Position 172 (N172) interacts with Mn(2+). Residues 175–177 (IYR), 189–191 (RWL), and 194–195 (RG) each bind prenylated FMN. E238 lines the Mn(2+) pocket. Catalysis depends on D287, which acts as the Proton donor.

Belongs to the UbiD family. As to quaternary structure, homohexamer. Prenylated FMN serves as cofactor. It depends on Mn(2+) as a cofactor.

It localises to the cell membrane. It catalyses the reaction a 4-hydroxy-3-(all-trans-polyprenyl)benzoate + H(+) = a 2-(all-trans-polyprenyl)phenol + CO2. The protein operates within cofactor biosynthesis; ubiquinone biosynthesis. Its function is as follows. Catalyzes the decarboxylation of 3-octaprenyl-4-hydroxy benzoate to 2-octaprenylphenol, an intermediate step in ubiquinone biosynthesis. This is 3-octaprenyl-4-hydroxybenzoate carboxy-lyase from Shewanella oneidensis (strain ATCC 700550 / JCM 31522 / CIP 106686 / LMG 19005 / NCIMB 14063 / MR-1).